A 214-amino-acid polypeptide reads, in one-letter code: uncharacterized protein (214 aa).

The N-terminal stretch at 1-15 (MRPLILSIFALFLAG) is a signal peptide. Cys-16 is lipidated: N-palmitoyl cysteine. Cys-16 is lipidated: S-diacylglycerol cysteine.

To E.coli YjbF.

It is found in the cell membrane. This is an uncharacterized protein from Escherichia coli (strain K12).